We begin with the raw amino-acid sequence, 308 residues long: Lysophosphatidic acid receptor 6 (308 aa).

The Extracellular segment spans residues methionine 1–leucine 16. Residue asparagine 5 is glycosylated (N-linked (GlcNAc...) asparagine). The helical transmembrane segment at tyrosine 17–leucine 43 threads the bilayer. The Cytoplasmic segment spans residues lysine 44–tyrosine 52. The helical transmembrane segment at methionine 53–valine 76 threads the bilayer. Residues arginine 77 to serine 89 lie on the Extracellular side of the membrane. A disulfide bond links cysteine 86 and cysteine 165. The chain crosses the membrane as a helical span at residues valine 90–valine 109. Over aspartate 110–alanine 130 the chain is Cytoplasmic. The helical transmembrane segment at arginine 131–phenylalanine 151 threads the bilayer. Residues glutamine 152 to leucine 178 lie on the Extracellular side of the membrane. Residues serine 179–arginine 206 form a helical membrane-spanning segment. The Cytoplasmic portion of the chain corresponds to threonine 207–valine 224. The helical transmembrane segment at leucine 225–serine 250 threads the bilayer. At leucine 251–methionine 269 the chain is on the extracellular side. Residues tyrosine 270–tyrosine 289 form a helical membrane-spanning segment. Cysteine 281 is lipidated: S-palmitoyl cysteine. Residues phenylalanine 290–threonine 308 lie on the Cytoplasmic side of the membrane.

Belongs to the G-protein coupled receptor 1 family. As to expression, induced in activated T-cells.

It localises to the cell membrane. Its function is as follows. Binds to oleoyl-L-alpha-lysophosphatidic acid (LPA). Intracellular cAMP is involved in the receptor activation. The sequence is that of Lysophosphatidic acid receptor 6 (LPAR6) from Gallus gallus (Chicken).